The sequence spans 117 residues: Large ribosomal subunit protein uL18 (117 aa).

Belongs to the universal ribosomal protein uL18 family. In terms of assembly, part of the 50S ribosomal subunit; part of the 5S rRNA/L5/L18/L25 subcomplex. Contacts the 5S and 23S rRNAs.

In terms of biological role, this is one of the proteins that bind and probably mediate the attachment of the 5S RNA into the large ribosomal subunit, where it forms part of the central protuberance. The polypeptide is Large ribosomal subunit protein uL18 (Azoarcus sp. (strain BH72)).